We begin with the raw amino-acid sequence, 3390 residues long: Genome polyprotein (3390 aa).

The interaction with host EXOC1 stretch occupies residues 1 to 15 (MNNQRKKTGKPSINM). Residues 1–100 (MNNQRKKTGK…MLSIINKRKK (100 aa)) are Cytoplasmic-facing. The tract at residues 37 to 72 (LLNGQGPMKLVMAFIAFLRFLAIPPTAGVLARWGTF) is hydrophobic; homodimerization of capsid protein C. A propeptide spans 101 to 114 (TSLCLMMMLPATLA) (ER anchor for the capsid protein C, removed in mature form by serine protease NS3). The helical transmembrane segment at 101–118 (TSLCLMMMLPATLAFHLT) threads the bilayer. Topologically, residues 119 to 243 (SRDGEPRMIV…VEKVETWALR (125 aa)) are extracellular. A glycan (N-linked (GlcNAc...) asparagine; by host) is linked at N183. Residues 244–264 (HPGFTILALFLAHYIGTSLTQ) traverse the membrane as a helical segment. Position 265 (K265) is a topological domain, cytoplasmic. Residues 266–280 (VVIFILLMLVTPSMT) traverse the membrane as a helical segment. Residues 281–723 (MRCVGVGNRD…VHQIFGSAYT (443 aa)) are Extracellular-facing. 4 cysteine pairs are disulfide-bonded: C283–C310, C340–C401, C354–C385, and C372–C396. N347 is a glycosylation site (N-linked (GlcNAc...) asparagine; by host). The tract at residues 378 to 391 (DRGWGNGCGLFGKG) is fusion peptide. N-linked (GlcNAc...) asparagine; by host glycosylation is present at N433. Intrachain disulfides connect C463–C563 and C580–C611. The helical transmembrane segment at 724-744 (ALFSGVSWIMKIGIGVLLTWI) threads the bilayer. The Cytoplasmic portion of the chain corresponds to 745–750 (GLNSKN). The helical transmembrane segment at 751–771 (TSMSFSCIAIGIITLYLGVVV) threads the bilayer. Residues 772 to 1193 (QADMGCVINW…MIGSNASDRM (422 aa)) lie on the Extracellular side of the membrane. 6 cysteine pairs are disulfide-bonded: C777–C788, C828–C916, C952–C996, C1053–C1102, C1064–C1086, and C1085–C1089. N-linked (GlcNAc...) asparagine; by host glycans are attached at residues N903 and N980. 2 N-linked (GlcNAc...) asparagine; by host glycosylation sites follow: N1132 and N1188. Residues 1194 to 1218 (GMGVTYLALIATFKIQPFLALGFFL) form a helical membrane-spanning segment. At 1219–1224 (RKLTSR) the chain is on the cytoplasmic side. The chain crosses the membrane as a helical span at residues 1225 to 1243 (ENLLLGVGLAMAATLRLPE). At 1244–1267 (DIEQMANGIALGLMALKLITQFET) the chain is on the lumenal side. Residues 1268 to 1288 (YQLWTALVSLTCSNTIFTLTV) form a helical membrane-spanning segment. Position 1289 (A1289) is a topological domain, cytoplasmic. A helical transmembrane segment spans residues 1290-1308 (WRTATLILAGISLLPVCQS). Residues 1309 to 1315 (SSMRKTD) are Lumenal-facing. The chain crosses the membrane as a helical span at residues 1316–1336 (WLPMTVAAMGVPPLPLFIFSL). The Cytoplasmic portion of the chain corresponds to 1337–1344 (KDTLKRRS). Residues 1345-1365 (WPLNEGVMAVGLVSILASSLL) form a helical membrane-spanning segment. At 1366–1368 (RND) the chain is on the lumenal side. A helical transmembrane segment spans residues 1369–1389 (VPMAGPLVAGGLLIACYVITG). Residues 1390–1443 (TSADLTVEKAADVTWEEEAEQTGVSHNLMITVDDDGTMRIKDDETENILTVLLK) lie on the Cytoplasmic side of the membrane. The interval 1396-1435 (VEKAADVTWEEEAEQTGVSHNLMITVDDDGTMRIKDDETE) is interacts with and activates NS3 protease. Positions 1444 to 1464 (TALLIVSGIFPCSIPATLLVW) form an intramembrane region, helical. At 1465-2146 (HTWQKQTQRS…VEELPETMET (682 aa)) the chain is on the cytoplasmic side. The 178-residue stretch at 1474-1651 (SGVLWDVPSP…NAEPDGPTPE (178 aa)) folds into the Peptidase S7 domain. Residues H1524, D1548, and S1608 each act as charge relay system; for serine protease NS3 activity in the active site. Residues 1654–1810 (EEMFKKRNLT…QSNAPIQDEE (157 aa)) enclose the Helicase ATP-binding domain. The important for RNA-binding stretch occupies residues 1658–1661 (KKRN). 1667–1674 (LHPGSGKT) serves as a coordination point for ATP. A DEAH box motif is present at residues 1758-1761 (DEAH). The region spanning 1821 to 1986 (GNEWITDFVG…GIIPALFEPE (166 aa)) is the Helicase C-terminal domain. At K1862 the chain carries N6-acetyllysine; by host. A helical membrane pass occupies residues 2147 to 2167 (LLLLGLMILLTGGAMLFLISG). Topologically, residues 2168 to 2169 (KG) are lumenal. The segment at residues 2170–2190 (IGKTSIGLICVIASSGMLWMA) is an intramembrane region (helical). A topological domain (lumenal) is located at residue D2191. Residues 2192-2212 (VPLQWIASAIVLEFFMMVLLI) traverse the membrane as a helical segment. Residues 2213–2227 (PEPEKQRTPQDNQLA) lie on the Cytoplasmic side of the membrane. Residues 2228–2248 (YVVIGILTLAAIVAANEMGLL) traverse the membrane as a helical segment. The Lumenal portion of the chain corresponds to 2249–2273 (ETTKRDLGMSKEPGVVSPTSYLDVD). An intramembrane region (helical) is located at residues 2274–2294 (LHPASAWTLYAVATTVITPML). The Lumenal segment spans residues 2295-2305 (RHTIENSTANV). N2300 and N2304 each carry an N-linked (GlcNAc...) asparagine; by host glycan. Positions 2306 to 2326 (SLAAIANQAVVLMGLDKGWPI) form an intramembrane region, helical. Over 2327-2346 (SKMDLGVPLLALGCYSQVNP) the chain is Lumenal. A helical transmembrane segment spans residues 2347–2367 (LTLIAAVLLLVTHYAIIGPGL). Residues 2368 to 2412 (QAKATREAQKRTAAGIMKNPTVDGIMTIDLDPVIYDSKFEKQLGQ) are Cytoplasmic-facing. Residues 2413 to 2433 (VMLLVLCAVQLLLMRTSWALC) traverse the membrane as a helical segment. Residues 2434-2458 (EVLTLATGPITTLWEGSPGKFWNTT) are Lumenal-facing. Residue N2456 is glycosylated (N-linked (GlcNAc...) asparagine; by host). The helical transmembrane segment at 2459-2479 (IAVSMANIFRGSYLAGAGLAF) threads the bilayer. Residues 2480-3390 (SIMKSVGTGK…KEEESEGAIW (911 aa)) are Cytoplasmic-facing. The mRNA cap 0-1 NS5-type MT domain occupies 2492 to 2753 (TGSQGETLGE…DVDLGAGTRH (262 aa)). An S-adenosyl-L-methionine-binding site is contributed by S2546. S2546 carries the post-translational modification Phosphoserine. Residue K2551 is the For 2'-O-MTase activity of the active site. An SUMO-interacting motif motif is present at residues 2567-2570 (VIDL). 6 residues coordinate S-adenosyl-L-methionine: G2576, W2577, T2594, K2595, D2621, and V2622. The active-site For 2'-O-MTase activity is the D2636. I2637 is an S-adenosyl-L-methionine binding site. Active-site for 2'-O-MTase activity residues include K2670 and E2706. Y2708 contacts S-adenosyl-L-methionine. The Zn(2+) site is built by E2927, H2931, C2936, and C2939. The 151-residue stretch at 3018–3168 (AMYADDTAGW…PIDDRFANAL (151 aa)) folds into the RdRp catalytic domain. Residues H3202, C3218, and C3337 each contribute to the Zn(2+) site.

The protein in the N-terminal section; belongs to the class I-like SAM-binding methyltransferase superfamily. mRNA cap 0-1 NS5-type methyltransferase family. As to quaternary structure, homodimer. Interacts (via N-terminus) with host EXOC1 (via C-terminus); this interaction results in EXOC1 degradation through the proteasome degradation pathway. In terms of assembly, forms heterodimers with envelope protein E in the endoplasmic reticulum and Golgi. Homodimer; in the endoplasmic reticulum and Golgi. Interacts with protein prM. Interacts with non-structural protein 1. As to quaternary structure, homodimer; Homohexamer when secreted. Interacts with envelope protein E. In terms of assembly, interacts (via N-terminus) with serine protease NS3. Forms a heterodimer with serine protease NS3. May form homooligomers. As to quaternary structure, forms a heterodimer with NS2B. Interacts with NS4B. Interacts with unphosphorylated RNA-directed RNA polymerase NS5; this interaction stimulates RNA-directed RNA polymerase NS5 guanylyltransferase activity. In terms of assembly, interacts with host MAVS; this interaction inhibits the synthesis of IFN-beta. Interacts with host AUP1; the interaction occurs in the presence of Dengue virus NS4B and induces lipophagy which facilitates production of virus progeny particles. Interacts with serine protease NS3. As to quaternary structure, homodimer. Interacts with host STAT2; this interaction inhibits the phosphorylation of the latter, and, when all viral proteins are present (polyprotein), targets STAT2 for degradation. Interacts with serine protease NS3. Specific enzymatic cleavages in vivo yield mature proteins. Cleavages in the lumen of endoplasmic reticulum are performed by host signal peptidase, whereas cleavages in the cytoplasmic side are performed by serine protease NS3. Signal cleavage at the 2K-4B site requires a prior NS3 protease-mediated cleavage at the 4A-2K site. Post-translationally, cleaved in post-Golgi vesicles by a host furin, releasing the mature small envelope protein M, and peptide pr. This cleavage is incomplete as up to 30% of viral particles still carry uncleaved prM. In terms of processing, N-glycosylated. N-glycosylated. The excreted form is glycosylated and this is required for efficient secretion of the protein from infected cells. Post-translationally, acetylated by host KAT5. Acetylation modulates NS3 RNA-binding and unwinding activities and plays an important positive role for viral replication. In terms of processing, sumoylation of RNA-directed RNA polymerase NS5 increases NS5 protein stability allowing proper viral RNA replication. Phosphorylated on serines residues. This phosphorylation may trigger NS5 nuclear localization.

It localises to the virion. Its subcellular location is the host nucleus. The protein localises to the host cytoplasm. It is found in the host perinuclear region. The protein resides in the secreted. It localises to the virion membrane. Its subcellular location is the host endoplasmic reticulum membrane. The protein localises to the host mitochondrion. It catalyses the reaction Selective hydrolysis of -Xaa-Xaa-|-Yaa- bonds in which each of the Xaa can be either Arg or Lys and Yaa can be either Ser or Ala.. The catalysed reaction is RNA(n) + a ribonucleoside 5'-triphosphate = RNA(n+1) + diphosphate. It carries out the reaction a ribonucleoside 5'-triphosphate + H2O = a ribonucleoside 5'-diphosphate + phosphate + H(+). The enzyme catalyses ATP + H2O = ADP + phosphate + H(+). It catalyses the reaction a 5'-end (5'-triphosphoguanosine)-ribonucleoside in mRNA + S-adenosyl-L-methionine = a 5'-end (N(7)-methyl 5'-triphosphoguanosine)-ribonucleoside in mRNA + S-adenosyl-L-homocysteine. The catalysed reaction is a 5'-end (N(7)-methyl 5'-triphosphoguanosine)-ribonucleoside in mRNA + S-adenosyl-L-methionine = a 5'-end (N(7)-methyl 5'-triphosphoguanosine)-(2'-O-methyl-ribonucleoside) in mRNA + S-adenosyl-L-homocysteine + H(+). Its function is as follows. Plays a role in virus budding by binding to the cell membrane and gathering the viral RNA into a nucleocapsid that forms the core of a mature virus particle. During virus entry, may induce genome penetration into the host cytoplasm after hemifusion induced by the surface proteins. Can migrate to the cell nucleus where it modulates host functions. Overcomes the anti-viral effects of host EXOC1 by sequestering and degrading the latter through the proteasome degradation pathway. Inhibits RNA silencing by interfering with host Dicer. In terms of biological role, prevents premature fusion activity of envelope proteins in trans-Golgi by binding to envelope protein E at pH6.0. After virion release in extracellular space, gets dissociated from E dimers. Functionally, acts as a chaperone for envelope protein E during intracellular virion assembly by masking and inactivating envelope protein E fusion peptide. prM is the only viral peptide matured by host furin in the trans-Golgi network probably to avoid catastrophic activation of the viral fusion activity in acidic Golgi compartment prior to virion release. prM-E cleavage is inefficient, and many virions are only partially matured. These uncleaved prM would play a role in immune evasion. Its function is as follows. May play a role in virus budding. Exerts cytotoxic effects by activating a mitochondrial apoptotic pathway through M ectodomain. May display a viroporin activity. Binds to host cell surface receptor and mediates fusion between viral and cellular membranes. Envelope protein is synthesized in the endoplasmic reticulum in the form of heterodimer with protein prM. They play a role in virion budding in the ER, and the newly formed immature particle is covered with 60 spikes composed of heterodimer between precursor prM and envelope protein E. The virion is transported to the Golgi apparatus where the low pH causes dissociation of PrM-E heterodimers and formation of E homodimers. prM-E cleavage is inefficient, and many virions are only partially matured. These uncleaved prM would play a role in immune evasion. In terms of biological role, involved in immune evasion, pathogenesis and viral replication. Once cleaved off the polyprotein, is targeted to three destinations: the viral replication cycle, the plasma membrane and the extracellular compartment. Essential for viral replication. Required for formation of the replication complex and recruitment of other non-structural proteins to the ER-derived membrane structures. Excreted as a hexameric lipoparticle that plays a role against host immune response. Antagonizing the complement function. Binds to the host macrophages and dendritic cells. Inhibits signal transduction originating from Toll-like receptor 3 (TLR3). Functionally, disrupts the host endothelial glycocalyx layer of host pulmonary microvascular endothelial cells, inducing degradation of sialic acid and shedding of heparan sulfate proteoglycans. NS1 induces expression of sialidases, heparanase, and activates cathepsin L, which activates heparanase via enzymatic cleavage. These effects are probably linked to the endothelial hyperpermeability observed in severe dengue disease. Its function is as follows. Component of the viral RNA replication complex that functions in virion assembly and antagonizes the host immune response. Required cofactor for the serine protease function of NS3. May have membrane-destabilizing activity and form viroporins. In terms of biological role, displays three enzymatic activities: serine protease, NTPase and RNA helicase. NS3 serine protease, in association with NS2B, performs its autocleavage and cleaves the polyprotein at dibasic sites in the cytoplasm: C-prM, NS2A-NS2B, NS2B-NS3, NS3-NS4A, NS4A-2K and NS4B-NS5. NS3 RNA helicase binds RNA and unwinds dsRNA in the 3' to 5' direction. Functionally, regulates the ATPase activity of the NS3 helicase activity. NS4A allows NS3 helicase to conserve energy during unwinding. Plays a role in the inhibition of the host innate immune response. Interacts with host MAVS and thereby prevents the interaction between RIGI and MAVS. In turn, IFN-beta production is impaired. Interacts with host AUP1 which mediates induction of lipophagy in host cells and facilitates production of virus progeny particles. Its function is as follows. Functions as a signal peptide for NS4B and is required for the interferon antagonism activity of the latter. Induces the formation of ER-derived membrane vesicles where the viral replication takes place. Inhibits interferon (IFN)-induced host STAT1 phosphorylation and nuclear translocation, thereby preventing the establishment of cellular antiviral state by blocking the IFN-alpha/beta pathway. In terms of biological role, replicates the viral (+) and (-) RNA genome, and performs the capping of genomes in the cytoplasm. NS5 methylates viral RNA cap at guanine N-7 and ribose 2'-O positions. Besides its role in RNA genome replication, also prevents the establishment of cellular antiviral state by blocking the interferon-alpha/beta (IFN-alpha/beta) signaling pathway. Inhibits host TYK2 and STAT2 phosphorylation, thereby preventing activation of JAK-STAT signaling pathway. This Dengue virus type 3 (strain China/80-2/1980) (DENV-3) protein is Genome polyprotein.